An 82-amino-acid chain; its full sequence is Small ribosomal subunit protein uS17 (82 aa).

This sequence belongs to the universal ribosomal protein uS17 family. In terms of assembly, part of the 30S ribosomal subunit.

Its function is as follows. One of the primary rRNA binding proteins, it binds specifically to the 5'-end of 16S ribosomal RNA. This Rhodopseudomonas palustris (strain TIE-1) protein is Small ribosomal subunit protein uS17.